The following is a 162-amino-acid chain: Small ribosomal subunit protein uS9 (162 aa).

The protein belongs to the universal ribosomal protein uS9 family.

This Methylobacterium sp. (strain 4-46) protein is Small ribosomal subunit protein uS9.